The chain runs to 301 residues: Probable protein phosphatase 2C 4 (301 aa).

Residues Met1 to Glu18 show a composition bias toward polar residues. Positions Met1–Lys20 are disordered. A PPM-type phosphatase domain is found at Ile23–Leu298. 4 residues coordinate Mn(2+): Asp57, Gly58, Asp237, and Asp289.

It belongs to the PP2C family. It depends on Mg(2+) as a cofactor. The cofactor is Mn(2+).

It is found in the membrane. It carries out the reaction O-phospho-L-seryl-[protein] + H2O = L-seryl-[protein] + phosphate. The enzyme catalyses O-phospho-L-threonyl-[protein] + H2O = L-threonyl-[protein] + phosphate. Its function is as follows. Enzyme with a broad specificity. The polypeptide is Probable protein phosphatase 2C 4 (Paramecium tetraurelia).